A 469-amino-acid chain; its full sequence is Probable Xaa-Pro aminopeptidase PEPP (469 aa).

Mn(2+) contacts are provided by D257, D268, E391, and E436.

The protein belongs to the peptidase M24B family. It depends on Mn(2+) as a cofactor.

It catalyses the reaction Release of any N-terminal amino acid, including proline, that is linked to proline, even from a dipeptide or tripeptide.. Its function is as follows. Catalyzes the removal of a penultimate prolyl residue from the N-termini of peptides. In Fusarium vanettenii (strain ATCC MYA-4622 / CBS 123669 / FGSC 9596 / NRRL 45880 / 77-13-4) (Fusarium solani subsp. pisi), this protein is Probable Xaa-Pro aminopeptidase PEPP (PEPP).